The primary structure comprises 98 residues: MDIDRGIRVAVDTGNVILGSKRTIQSLKLGKGKLVVMASNIPEDLKEDIEYYAKLSEIPVYTHEGTSVELGSVCGKPFTVGALLIQDPGDSTILEMVG.

The protein belongs to the eukaryotic ribosomal protein eL30 family.

The chain is Large ribosomal subunit protein eL30 (rpl30e) from Methanothermobacter thermautotrophicus (strain ATCC 29096 / DSM 1053 / JCM 10044 / NBRC 100330 / Delta H) (Methanobacterium thermoautotrophicum).